We begin with the raw amino-acid sequence, 810 residues long: F-BAR domain only protein 2 (810 aa).

In terms of domain architecture, F-BAR spans 3-250 (MAYFVENFWG…NMANTTVESL (248 aa)). A mediates dimerization and binding to membranes enriched in Pi(4,5)-P2 and induces their tubulation region spans residues 3-274 (MAYFVENFWG…PGLIEFEECD (272 aa)). A coiled-coil region spans residues 87–156 (HLDLVRKLQE…CVEQERLKKE (70 aa)). Residue Lys-297 forms a Glycyl lysine isopeptide (Lys-Gly) (interchain with G-Cter in SUMO2) linkage. A disordered region spans residues 301–352 (DAESVECPDADSLNIPDVDEEGYSIKPETNQNDTKENHFYSSSDSDSEDEEP). Ser-312 carries the phosphoserine modification. Phosphothreonine is present on Thr-385. Ser-387, Ser-394, and Ser-403 each carry phosphoserine. The interval 404–537 (NEELTKSKPS…VSRGPSPVSL (134 aa)) is disordered. Over residues 433-456 (PSLDSSSSSSLTSSSSARPTTPLS) the composition is skewed to low complexity. Phosphoserine is present on residues Ser-488, Ser-493, Ser-496, Ser-508, Ser-510, Ser-511, and Ser-533. Positions 502 to 521 (PLARAESSSSISSSASLSAA) are enriched in low complexity. Residues 521–810 (ANTPTVGVSR…FATGRYLADC (290 aa)) are mediates interaction with DAB2, EPS15, EPS15R and ITSN1. In terms of domain architecture, MHD spans 542–809 (TLPVAVALTE…RFATGRYLAD (268 aa)).

This sequence belongs to the FCHO family. In terms of assembly, homodimer; disulfide-linked. May form homotetramer. Interacts with AP2A1. Interacts with EPS15, EPS15R, ITSN1 and ITSN2; recruit those scaffolding proteins which in turn may interact with the adaptor protein complex AP-2 at the plasma membrane. Interacts with DAB2 (via DPF motifs); mediates LDL receptor/LDLR endocytosis. Ubiquitinated. Mainly undergoes monoubiquitination but also polyubiquitination.

The protein localises to the membrane. The protein resides in the clathrin-coated pit. Functionally, functions in an early step of clathrin-mediated endocytosis. Has both a membrane binding/bending activity and the ability to recruit proteins essential to the formation of functional clathrin-coated pits. Has a lipid-binding activity with a preference for membranes enriched in phosphatidylserine and phosphoinositides (Pi(4,5) biphosphate) like the plasma membrane. Its membrane-bending activity might be important for the subsequent action of clathrin and adaptors in the formation of clathrin-coated vesicles. Involved in adaptor protein complex AP-2-dependent endocytosis of the transferrin receptor, it also functions in the AP-2-independent endocytosis of the LDL receptor. This Homo sapiens (Human) protein is F-BAR domain only protein 2 (FCHO2).